A 264-amino-acid chain; its full sequence is 3-dehydroquinate dehydratase (264 aa).

3-dehydroquinate-binding positions include 50–52 (EWR) and arginine 86. The active-site Proton donor/acceptor is histidine 148. Lysine 175 serves as the catalytic Schiff-base intermediate with substrate. 3-dehydroquinate is bound by residues arginine 217, serine 236, and glutamine 240.

Belongs to the type-I 3-dehydroquinase family. As to quaternary structure, homodimer.

The enzyme catalyses 3-dehydroquinate = 3-dehydroshikimate + H2O. Its pathway is metabolic intermediate biosynthesis; chorismate biosynthesis; chorismate from D-erythrose 4-phosphate and phosphoenolpyruvate: step 3/7. Its function is as follows. Involved in the third step of the chorismate pathway, which leads to the biosynthesis of aromatic amino acids. Catalyzes the cis-dehydration of 3-dehydroquinate (DHQ) and introduces the first double bond of the aromatic ring to yield 3-dehydroshikimate. The polypeptide is 3-dehydroquinate dehydratase (Albidiferax ferrireducens (strain ATCC BAA-621 / DSM 15236 / T118) (Rhodoferax ferrireducens)).